Consider the following 332-residue polypeptide: Large ribosomal subunit protein uL29m (332 aa).

The disordered stretch occupies residues 19–40 (RFTKPKPKPAKRENVRLPTQRT). Positions 264-327 (TSENTESAIA…IQLQEEDAKN (64 aa)) form a coiled coil.

The protein belongs to the universal ribosomal protein uL29 family. Component of the mitochondrial large ribosomal subunit. Mature mitochondrial ribosomes consist of a small (37S) and a large (54S) subunit. The 37S subunit contains at least 33 different proteins and 1 molecule of RNA (15S). The 54S subunit contains at least 45 different proteins and 1 molecule of RNA (21S).

The protein localises to the mitochondrion. This chain is Large ribosomal subunit protein uL29m (MRPL4), found in Kluyveromyces lactis (strain ATCC 8585 / CBS 2359 / DSM 70799 / NBRC 1267 / NRRL Y-1140 / WM37) (Yeast).